A 164-amino-acid chain; its full sequence is Putative histone H2B type 2-D (164 aa).

The span at 1–12 shows a compositional bias: low complexity; the sequence is MPEPAKFAPAPK. The segment at 1-33 is disordered; that stretch reads MPEPAKFAPAPKKGSKKAVTKAQKKDGKKRKRS. The residue at position 2 (Pro-2) is an N-acetylproline. Lys-6 bears the N6-(2-hydroxyisobutyryl)lysine; alternate mark. Lys-6 and Lys-12 each carry N6-(beta-hydroxybutyryl)lysine; alternate. N6-acetyllysine; alternate is present on residues Lys-6, Lys-12, and Lys-13. Lys-6 bears the N6-butyryllysine; alternate mark. N6-crotonyllysine; alternate occurs at positions 6, 12, and 13. N6-lactoyllysine; alternate is present on residues Lys-6 and Lys-12. Lys-6 is covalently cross-linked (Glycyl lysine isopeptide (Lys-Gly) (interchain with G-Cter in SUMO2); alternate). An N6-(2-hydroxyisobutyryl)lysine; alternate modification is found at Lys-13. Residue Ser-15 is modified to Phosphoserine; by STK4/MST1. N6-acetyllysine; alternate occurs at positions 16, 17, 21, and 24. 4 positions are modified to N6-crotonyllysine; alternate: Lys-16, Lys-17, Lys-21, and Lys-24. Residues Lys-16, Lys-17, Lys-21, and Lys-24 each carry the N6-lactoyllysine; alternate modification. N6-(beta-hydroxybutyryl)lysine; alternate occurs at positions 17 and 21. An N6-glutaryllysine; alternate modification is found at Lys-17. N6-(2-hydroxyisobutyryl)lysine; alternate occurs at positions 21 and 24. Lys-21 bears the N6-butyryllysine; alternate mark. Lys-21 is covalently cross-linked (Glycyl lysine isopeptide (Lys-Gly) (interchain with G-Cter in SUMO2); alternate). At Lys-25 the chain carries N6-(2-hydroxyisobutyryl)lysine. Lys-35 is subject to N6-(2-hydroxyisobutyryl)lysine; alternate. The residue at position 35 (Lys-35) is an N6-(beta-hydroxybutyryl)lysine; alternate. Lys-35 carries the N6-crotonyllysine; alternate modification. N6-glutaryllysine; alternate is present on Lys-35. Residue Lys-35 is modified to N6-succinyllysine; alternate. Residue Lys-35 forms a Glycyl lysine isopeptide (Lys-Gly) (interchain with G-Cter in ubiquitin); alternate linkage. The residue at position 37 (Ser-37) is a Phosphoserine; by AMPK. N6-(2-hydroxyisobutyryl)lysine; alternate occurs at positions 44, 47, and 58. The residue at position 44 (Lys-44) is an N6-lactoyllysine; alternate. 2 positions are modified to N6-glutaryllysine; alternate: Lys-44 and Lys-47. Lys-47 carries the N6-methyllysine; alternate modification. Lys-58 is subject to N6,N6-dimethyllysine; alternate. Arg-80 bears the Dimethylated arginine mark. Lys-86 carries the post-translational modification N6-(2-hydroxyisobutyryl)lysine; alternate. At Lys-86 the chain carries N6-(beta-hydroxybutyryl)lysine; alternate. Lys-86 carries the post-translational modification N6-acetyllysine; alternate. N6-lactoyllysine; alternate is present on Lys-86. Lys-86 is modified (N6,N6,N6-trimethyllysine; alternate). An omega-N-methylarginine mark is found at Arg-87 and Arg-93. The segment at 111 to 140 is disordered; it reads PCPRAPRRSPSTPAPSESLPGPGARSLPPS.

It belongs to the histone H2B family. In terms of assembly, the nucleosome is a histone octamer containing two molecules each of H2A, H2B, H3 and H4 assembled in one H3-H4 heterotetramer and two H2A-H2B heterodimers. The octamer wraps approximately 147 bp of DNA. In terms of processing, phosphorylation at Ser-37 (H2BS36ph) by AMPK in response to stress promotes transcription. Phosphorylated on Ser-15 (H2BS14ph) by STK4/MST1 during apoptosis; which facilitates apoptotic chromatin condensation. Also phosphorylated on Ser-15 in response to DNA double strand breaks (DSBs), and in correlation with somatic hypermutation and immunoglobulin class-switch recombination. Post-translationally, crotonylation (Kcr) is specifically present in male germ cells and marks testis-specific genes in post-meiotic cells, including X-linked genes that escape sex chromosome inactivation in haploid cells. Crotonylation marks active promoters and enhancers and confers resistance to transcriptional repressors. It is also associated with post-meiotically activated genes on autosomes. Lactylated in macrophages by EP300/P300 by using lactoyl-CoA directly derived from endogenous or exogenous lactate, leading to stimulates gene transcription.

The protein localises to the nucleus. Its subcellular location is the chromosome. Functionally, core component of nucleosome. Nucleosomes wrap and compact DNA into chromatin, limiting DNA accessibility to the cellular machineries which require DNA as a template. Histones thereby play a central role in transcription regulation, DNA repair, DNA replication and chromosomal stability. DNA accessibility is regulated via a complex set of post-translational modifications of histones, also called histone code, and nucleosome remodeling. The polypeptide is Putative histone H2B type 2-D (Homo sapiens (Human)).